The primary structure comprises 527 residues: EGF domain-specific O-linked N-acetylglucosamine transferase (527 aa).

The first 19 residues, M1–Q19, serve as a signal peptide directing secretion. The Required for optimal activity motif lies at D295 to D297. A glycan (N-linked (GlcNAc...) asparagine) is linked at N354. The Prevents secretion from ER motif lies at H524–L527.

The protein belongs to the glycosyltransferase 61 family. Widely expressed. Expressed in brain, heart, kidney, lung, skeletal muscles and thymus. Highest expression is observed in lung and the lowest in skeletal muscles.

It is found in the endoplasmic reticulum lumen. It catalyses the reaction L-seryl-[protein] + UDP-N-acetyl-alpha-D-glucosamine = 3-O-(N-acetyl-beta-D-glucosaminyl)-L-seryl-[protein] + UDP + H(+). It carries out the reaction L-threonyl-[protein] + UDP-N-acetyl-alpha-D-glucosamine = 3-O-(N-acetyl-beta-D-glucosaminyl)-L-threonyl-[protein] + UDP + H(+). In terms of biological role, catalyzes the transfer of a single N-acetylglucosamine from UDP-GlcNAc to a serine or threonine residue in extracellular proteins resulting in their modification with a beta-linked N-acetylglucosamine (O-GlcNAc). Specifically glycosylates the Thr residue located between the fifth and sixth conserved cysteines of folded EGF-like domains. The polypeptide is EGF domain-specific O-linked N-acetylglucosamine transferase (Eogt) (Mus musculus (Mouse)).